A 534-amino-acid polypeptide reads, in one-letter code: EH domain-containing protein 1 (534 aa).

Methionine 1 is subject to N-acetylmethionine. In terms of domain architecture, Dynamin-type G spans 55–286 (FDNKPMVLLV…DLFKDIQSLP (232 aa)). Residues 65 to 72 (GQYSTGKT) are G1 motif. Position 65-72 (65-72 (GQYSTGKT)) interacts with ATP. The segment at 91–92 (EP) is G2 motif. Residues 153-156 (DTPG) are G3 motif. A coiled-coil region spans residues 198–227 (DEFSEVIKALKNHEDKIRVVLNKADQIETQ). The G4 motif stretch occupies residues 219 to 222 (NKAD). Lysine 220 lines the ATP pocket. Residue isoleucine 243 is a region of interest, G5 motif. Tryptophan 258 is a binding site for ATP. The region spanning 444-532 (DKPTYDEIFY…PHLVPPSKRR (89 aa)) is the EH domain. Phosphoserine is present on serine 456. The region spanning 476-511 (LPNTVLGKIWKLADVDRDGLLDDEEFALANHLIKVK) is the EF-hand domain. 4 residues coordinate Ca(2+): aspartate 489, aspartate 491, aspartate 493, and glutamate 500.

It belongs to the TRAFAC class dynamin-like GTPase superfamily. Dynamin/Fzo/YdjA family. EHD subfamily. As to quaternary structure, homooligomer, and heterooligomer with EHD2, EHD3 and EHD4, ATP-binding is required for heterooligomerization. Interacts (via EH domain) with MICALL1 (via NPF1 motif); the interaction is direct and recruits EHD1 to membranes. Interacts with RAB35; the interaction is indirect through MICALL1 and recruits EHD1 to membranes. Interacts (via EH domain) with PACSIN2 (via NPF motifs); regulates localization to tubular recycling endosome membranes. Interacts with PACSIN1. Interacts with RAB8A. Interacts with FER1L5 (via second C2 domain). Interacts with MYOF. Interacts with ZFYVE20. Interacts (via EH domain) with RAB11FIP2.

It is found in the recycling endosome membrane. Its subcellular location is the early endosome membrane. It localises to the cell membrane. The protein resides in the cell projection. The protein localises to the cilium membrane. Its function is as follows. ATP- and membrane-binding protein that controls membrane reorganization/tubulation upon ATP hydrolysis. Acts in early endocytic membrane fusion and membrane trafficking of recycling endosomes. Recruited to endosomal membranes upon nerve growth factor stimulation, indirectly regulates neurite outgrowth. Plays a role in myoblast fusion. Involved in the unidirectional retrograde dendritic transport of endocytosed BACE1 and in efficient sorting of BACE1 to axons implicating a function in neuronal APP processing. Plays a role in the formation of the ciliary vesicle (CV), an early step in cilium biogenesis. Proposed to be required for the fusion of distal appendage vesicles (DAVs) to form the CV by recruiting SNARE complex component SNAP29. Is required for recruitment of transition zone proteins CEP290, RPGRIP1L, TMEM67 and B9D2, and of IFT20 following DAV reorganization before Rab8-dependent ciliary membrane extension. Required for the loss of CCP110 form the mother centriole essential for the maturation of the basal body during ciliogenesis. The polypeptide is EH domain-containing protein 1 (Bos taurus (Bovine)).